The following is a 511-amino-acid chain: Maturase K (511 aa).

Belongs to the intron maturase 2 family. MatK subfamily.

It localises to the plastid. The protein resides in the chloroplast. Usually encoded in the trnK tRNA gene intron. Probably assists in splicing its own and other chloroplast group II introns. The sequence is that of Maturase K from Nandina domestica (Heavenly bamboo).